We begin with the raw amino-acid sequence, 264 residues long: Tryptophan synthase alpha chain (264 aa).

Active-site proton acceptor residues include glutamate 44 and aspartate 55.

This sequence belongs to the TrpA family. As to quaternary structure, tetramer of two alpha and two beta chains.

It catalyses the reaction (1S,2R)-1-C-(indol-3-yl)glycerol 3-phosphate + L-serine = D-glyceraldehyde 3-phosphate + L-tryptophan + H2O. It functions in the pathway amino-acid biosynthesis; L-tryptophan biosynthesis; L-tryptophan from chorismate: step 5/5. Its function is as follows. The alpha subunit is responsible for the aldol cleavage of indoleglycerol phosphate to indole and glyceraldehyde 3-phosphate. This chain is Tryptophan synthase alpha chain, found in Lactiplantibacillus plantarum (strain ATCC BAA-793 / NCIMB 8826 / WCFS1) (Lactobacillus plantarum).